The sequence spans 101 residues: Small ribosomal subunit protein uS14 (101 aa).

Belongs to the universal ribosomal protein uS14 family. As to quaternary structure, part of the 30S ribosomal subunit. Contacts proteins S3 and S10.

In terms of biological role, binds 16S rRNA, required for the assembly of 30S particles and may also be responsible for determining the conformation of the 16S rRNA at the A site. The chain is Small ribosomal subunit protein uS14 from Synechococcus sp. (strain JA-3-3Ab) (Cyanobacteria bacterium Yellowstone A-Prime).